We begin with the raw amino-acid sequence, 860 residues long: Leucine-rich repeat and death domain-containing protein 1 (860 aa).

The disordered stretch occupies residues 1-103 (MSEKEGMSEV…TGTSQSLSSL (103 aa)). A compositionally biased stretch (polar residues) spans 50-72 (KSSNQIYETHPRQNTLESTSSSG). The segment covering 90 to 103 (TSTRTGTSQSLSSL) has biased composition (low complexity). LRR repeat units lie at residues 139 to 163 (LGADNFTVNLEAKGLQEFPKDILKI), 164 to 186 (KYVKYLYLDKNQIKTFQGADSGD), 187 to 210 (LLGLEILSLQENGLSSLPSEIQLL), 211 to 233 (HNLRILNVSHNHISHIPKEISQL), 235 to 256 (NIRQLFFYNNYIENFPSDLECL), 257 to 279 (GNLEILSLGKNKLRHIPDTLPSL), 281 to 302 (TLRVLNLEYNQLTTFPKALCFL), 303 to 325 (PKLISLDLTGNLISSLPKEIREL), 326 to 348 (KNLETLLMDHNKLTFLAVEIFQL), 350 to 371 (KIKELQLADNKLEVISHKIENF), 372 to 394 (RELRILILDKNLLKNIPEKISCC), 396 to 417 (MLECLSLSDNKLTELPKYIHKL), 419 to 440 (NLRKLHVNRNNMVKITDCISHL), 441 to 463 (NNICSLEFSGNIITDVPIEIKNC), 465 to 486 (KIIKIELSYNKIMYFPLGLCAL), 487 to 510 (DSLYYLSVNGNYISEIPVDISFSK), 512 to 532 (LLHLELSENKLLIFSEHFCSL), 533 to 555 (INLKYLDLGKNQIKKIPASISNM), 557 to 578 (SLHVLILCCNKFETFPRELCTL), 579 to 601 (ENLQVLDLSENQLQKISSDICNL), 603 to 624 (GIQKLNFSSNQFIHFPIELCQL), 627 to 650 (LEQLNISQIKGRKLTRLPGELSNM), 651 to 673 (TQLKELDISNNAIREIPRNIGEL), 675 to 696 (NLVSLHAYNNQISYLPPSLLSL), 697 to 719 (NDLQQLNLSGNNLTALPSAIYNI), and 721 to 742 (SLKEINFDDNPLLRPPVEICKG). The Death domain occupies 764 to 852 (EKIFKIVANN…EIMDKITALN (89 aa)). Residues 856 to 860 (RAIKF) form an LRR 27 repeat.

This chain is Leucine-rich repeat and death domain-containing protein 1 (LRRD1), found in Homo sapiens (Human).